We begin with the raw amino-acid sequence, 156 residues long: Large ribosomal subunit protein eL24 (156 aa).

Basic and acidic residues predominate over residues 110-129; it reads KESKAKKQETQAAKKAEKAK. The disordered stretch occupies residues 110-156; sequence KESKAKKQETQAAKKAEKAKNAANPKARVTSKQGAKGAPVKVAAKSR. Over residues 130–156 the composition is skewed to low complexity; that stretch reads NAANPKARVTSKQGAKGAPVKVAAKSR.

The protein belongs to the eukaryotic ribosomal protein eL24 family. Component of the large ribosomal subunit (LSU). Mature N.crassa ribosomes consist of a small (40S) and a large (60S) subunit. The 40S small subunit contains 1 molecule of ribosomal RNA (18S rRNA) and at least 32 different proteins. The large 60S subunit contains 3 rRNA molecules (26S, 5.8S and 5S rRNA) and at least 42 different proteins.

The protein resides in the cytoplasm. In terms of biological role, component of the ribosome, a large ribonucleoprotein complex responsible for the synthesis of proteins in the cell. The small ribosomal subunit (SSU) binds messenger RNAs (mRNAs) and translates the encoded message by selecting cognate aminoacyl-transfer RNA (tRNA) molecules. The large subunit (LSU) contains the ribosomal catalytic site termed the peptidyl transferase center (PTC), which catalyzes the formation of peptide bonds, thereby polymerizing the amino acids delivered by tRNAs into a polypeptide chain. The nascent polypeptides leave the ribosome through a tunnel in the LSU and interact with protein factors that function in enzymatic processing, targeting, and the membrane insertion of nascent chains at the exit of the ribosomal tunnel. The polypeptide is Large ribosomal subunit protein eL24 (rpl-24) (Neurospora crassa (strain ATCC 24698 / 74-OR23-1A / CBS 708.71 / DSM 1257 / FGSC 987)).